The sequence spans 160 residues: Putative antiporter subunit mnhE2 (160 aa).

A run of 3 helical transmembrane segments spans residues 23–43, 55–75, and 100–120; these read FKFTTFFAGFLIGLIVIYILH, IWVAIKFLAVYLYQLITSSIS, and SNWAITFLTILIIITPGSTVI.

It belongs to the CPA3 antiporters (TC 2.A.63) subunit E family. May form a heterooligomeric complex that consists of seven subunits: mnhA2, mnhB2, mnhC2, mnhD2, mnhE2, mnhF2 and mnhG2.

It is found in the cell membrane. The protein is Putative antiporter subunit mnhE2 (mnhE2) of Staphylococcus epidermidis (strain ATCC 35984 / DSM 28319 / BCRC 17069 / CCUG 31568 / BM 3577 / RP62A).